Reading from the N-terminus, the 342-residue chain is Phosphate acyltransferase (342 aa).

Belongs to the PlsX family. Homodimer. Probably interacts with PlsY.

The protein localises to the cytoplasm. It carries out the reaction a fatty acyl-[ACP] + phosphate = an acyl phosphate + holo-[ACP]. Its pathway is lipid metabolism; phospholipid metabolism. Catalyzes the reversible formation of acyl-phosphate (acyl-PO(4)) from acyl-[acyl-carrier-protein] (acyl-ACP). This enzyme utilizes acyl-ACP as fatty acyl donor, but not acyl-CoA. This chain is Phosphate acyltransferase, found in Shewanella sp. (strain MR-4).